The primary structure comprises 30 residues: Photosystem I reaction center subunit XII (30 aa).

A helical transmembrane segment spans residues 7–26 (IMVALFAALFTGILALRLGT).

It belongs to the PsaM family.

The protein localises to the plastid. The protein resides in the chloroplast thylakoid membrane. This is Photosystem I reaction center subunit XII from Mesostigma viride (Green alga).